We begin with the raw amino-acid sequence, 240 residues long: 1-(5-phosphoribosyl)-5-[(5-phosphoribosylamino)methylideneamino] imidazole-4-carboxamide isomerase (240 aa).

Asp-10 (proton acceptor) is an active-site residue. Asp-131 functions as the Proton donor in the catalytic mechanism.

Belongs to the HisA/HisF family.

The protein resides in the cytoplasm. The enzyme catalyses 1-(5-phospho-beta-D-ribosyl)-5-[(5-phospho-beta-D-ribosylamino)methylideneamino]imidazole-4-carboxamide = 5-[(5-phospho-1-deoxy-D-ribulos-1-ylimino)methylamino]-1-(5-phospho-beta-D-ribosyl)imidazole-4-carboxamide. The protein operates within amino-acid biosynthesis; L-histidine biosynthesis; L-histidine from 5-phospho-alpha-D-ribose 1-diphosphate: step 4/9. The protein is 1-(5-phosphoribosyl)-5-[(5-phosphoribosylamino)methylideneamino] imidazole-4-carboxamide isomerase of Shouchella clausii (strain KSM-K16) (Alkalihalobacillus clausii).